A 338-amino-acid chain; its full sequence is Ferrochelatase (338 aa).

H189 and E294 together coordinate Fe cation.

This sequence belongs to the ferrochelatase family.

It is found in the cytoplasm. It carries out the reaction heme b + 2 H(+) = protoporphyrin IX + Fe(2+). It functions in the pathway porphyrin-containing compound metabolism; protoheme biosynthesis; protoheme from protoporphyrin-IX: step 1/1. Its function is as follows. Catalyzes the ferrous insertion into protoporphyrin IX. The chain is Ferrochelatase from Pseudomonas putida (strain ATCC 47054 / DSM 6125 / CFBP 8728 / NCIMB 11950 / KT2440).